The following is a 94-amino-acid chain: MDNGIKYAVFTEKSLRLLGKNQYTFNVESGFTKTEIKHWVELFFGVKVVAVNSHRLPGKGRRIGPILGHTMHYRRMIIILQPGYSIPLLDREKN.

The protein belongs to the universal ribosomal protein uL23 family. As to quaternary structure, part of the 50S ribosomal subunit.

The protein resides in the plastid. Its subcellular location is the chloroplast. Its function is as follows. Binds to 23S rRNA. The sequence is that of Large ribosomal subunit protein uL23cz (rpl23-A) from Agrostis stolonifera (Creeping bentgrass).